We begin with the raw amino-acid sequence, 828 residues long: Calpain-A (828 aa).

Positions 1 to 14 (MDDLRGFLRQAGQE) constitute an EF-hand 1 domain. The Calpain catalytic domain occupies 88 to 387 (LFEDPLFPAS…FDRVEICNLS (300 aa)). Active-site residues include C143, H299, and N327. Residues 388-557 (PDSLTEDQQN…TQNNMEENDD (170 aa)) are domain III. The linker stretch occupies residues 558 to 577 (HVGYGGKADTITPGFPTPKP). Residues 578 to 828 (IDPQKEGLRR…EEWIERTIYS (251 aa)) form a domain IV region. EF-hand domains lie at 579 to 614 (DPQKEGLRRLFDSIAGKDMEVDWMELKRILDHSMRD), 699 to 734 (FSKDVCRSMVAMLDADKSGKLGFEEFETLLSEIAKW), 729 to 764 (SEIAKWKAIFKVYDVENTGRVSGFQLREALNSAGYH), and 764 to 799 (HLNNRVLNVLGHRYGSRDGKIAFDDFIMCAVKIKTY). Residues D712, D714, S716, K718, E723, D742, T746, R748, and Q753 each contribute to the Ca(2+) site.

It belongs to the peptidase C2 family. Post-translationally, undergoes calcium-dependent autolytic cleavage between Lys-54 and Asn-55, which is necessary for activation of the protein. In terms of tissue distribution, localized to the anterior and posterior embryonic poles just after fertilization. Becomes distributed around the polar buds and just below the pole cells of the posterior pole during cleavage cycles. During these nuclear divisions anterior localization disappears. Localized to actin caps that underlie the plasma membrane, immediately above each nucleus at cleavage cycles 8 and 9. Localized to a small set of nerve, midgut and blood cells in adults.

Its subcellular location is the cytoplasm. Activated by millimolar concentrations of calcium, and by phosphatidylinositol 4,5-diphosphate, phosphatidylinositol 4-monophosphate, phosphatidylinositol and phosphatidic acid. Its function is as follows. Calcium-regulated non-lysosomal thiol-protease. Involved in the organization of the actin-related cytoskeleton during embryogenesis. The sequence is that of Calpain-A (CalpA) from Drosophila melanogaster (Fruit fly).